Consider the following 507-residue polypeptide: Probable cytochrome P450 6a18 (507 aa).

Cys451 is a binding site for heme.

It belongs to the cytochrome P450 family. Heme is required as a cofactor.

The protein resides in the endoplasmic reticulum membrane. It is found in the microsome membrane. In terms of biological role, may be involved in the metabolism of insect hormones and in the breakdown of synthetic insecticides. The sequence is that of Probable cytochrome P450 6a18 (Cyp6a18) from Drosophila melanogaster (Fruit fly).